Here is a 271-residue protein sequence, read N- to C-terminus: Urease accessory protein UreD (271 aa).

This sequence belongs to the UreD family. In terms of assembly, ureD, UreF and UreG form a complex that acts as a GTP-hydrolysis-dependent molecular chaperone, activating the urease apoprotein by helping to assemble the nickel containing metallocenter of UreC. The UreE protein probably delivers the nickel.

Its subcellular location is the cytoplasm. Required for maturation of urease via the functional incorporation of the urease nickel metallocenter. The protein is Urease accessory protein UreD of Bacillus sp. (strain TB-90).